Reading from the N-terminus, the 843-residue chain is Elongation factor 2 (843 aa).

The tr-type G domain maps to 17-253; sequence HNIRNMSVIA…LWGENFFDPA (237 aa). GTP is bound at residue 26 to 33; sequence AHVDHGKS. Phosphothreonine is present on residues threonine 57 and threonine 59. GTP is bound at residue 158-161; the sequence is NKMD. Histidine 700 bears the Diphthamide mark.

Belongs to the TRAFAC class translation factor GTPase superfamily. Classic translation factor GTPase family. EF-G/EF-2 subfamily. Phosphorylation by EF-2 kinase completely inactivates EF-2.

It is found in the cytoplasm. The catalysed reaction is GTP + H2O = GDP + phosphate + H(+). In terms of biological role, catalyzes the GTP-dependent ribosomal translocation step during translation elongation. During this step, the ribosome changes from the pre-translocational (PRE) to the post-translocational (POST) state as the newly formed A-site-bound peptidyl-tRNA and P-site-bound deacylated tRNA move to the P and E sites, respectively. Catalyzes the coordinated movement of the two tRNA molecules, the mRNA and conformational changes in the ribosome. The sequence is that of Elongation factor 2 from Beta vulgaris (Sugar beet).